The following is a 93-amino-acid chain: Secretoglobin family 3A member 2 (93 aa).

A signal peptide spans Met-1–Ala-21.

This sequence belongs to the secretoglobin family. UGRP subfamily. Homodimer; disulfide-linked. Monomer. Interacts with APOA1. Highly expressed in lung and trachea. Detected throughout the airway epithelium in lung, with slightly higher expression in large airways. Found in lung submucosal gland acinus where it localizes to serous-like cells. Probably expressed in club cells of the bronchioles. Not detected in other tissues tested.

It is found in the secreted. Secreted cytokine-like protein. Binds to the scavenger receptor MARCO. Can also bind to pathogens including the Gram-positive bacterium L.monocytogenes, the Gram-negative bacterium P.aeruginosa, and yeast. Strongly inhibits phospholipase A2 (PLA2G1B) activity. Seems to have anti-inflammatory effects in respiratory epithelium. Also has anti-fibrotic activity in lung. May play a role in fetal lung development and maturation. Promotes branching morphogenesis during early stages of lung development. In the pituitary, may inhibit production of follicle-stimulating hormone (FSH) and luteinizing hormone (LH). The chain is Secretoglobin family 3A member 2 (SCGB3A2) from Homo sapiens (Human).